We begin with the raw amino-acid sequence, 267 residues long: Indole-3-glycerol phosphate synthase (267 aa).

This sequence belongs to the TrpC family.

It catalyses the reaction 1-(2-carboxyphenylamino)-1-deoxy-D-ribulose 5-phosphate + H(+) = (1S,2R)-1-C-(indol-3-yl)glycerol 3-phosphate + CO2 + H2O. It participates in amino-acid biosynthesis; L-tryptophan biosynthesis; L-tryptophan from chorismate: step 4/5. This chain is Indole-3-glycerol phosphate synthase, found in Cupriavidus necator (strain ATCC 17699 / DSM 428 / KCTC 22496 / NCIMB 10442 / H16 / Stanier 337) (Ralstonia eutropha).